Here is a 240-residue protein sequence, read N- to C-terminus: MSTFIFPGDSFPVDPTTPVKLGPGIYCDPNTQEIRPVNTGVLHVSAKGKSGVQTAYIDYSSKRYIPSVNDFVIGVIIGTFSDSYKVSLQNFSSSVSLSYMAFPNASKKNRPTLQVGDLVYARVCTAEKELEAEIECFDSTTGRDAGFGILEDGMIIDVNLNFARQLLFNNDFPLLKVLAAHTKFEVAIGLNGKIWVKCEELSNTLACYRTIMECCQKNDTAAFKDIAKRQFKEILTVKEE.

One can recognise an S1 motif domain in the interval 67 to 137 (SVNDFVIGVI…KELEAEIECF (71 aa)).

This sequence belongs to the RRP40 family. Component of the RNA exosome complex. Specifically part of the catalytically inactive RNA exosome core complex (Exo-9) which may associate with the catalytic subunits RRP6 and DIS3 in cytoplasmic- and nuclear-specific RNA exosome complex forms. Exo-9 is formed by a hexameric base ring of RNase PH domain-containing subunits and a cap ring consisting of CSL4, RRP4 and RRP40.

The protein resides in the cytoplasm. The protein localises to the nucleus. It localises to the nucleolus. Non-catalytic component of the RNA exosome complex which has 3'-&gt;5' exoribonuclease activity and participates in a multitude of cellular RNA processing and degradation events. In the nucleus, the RNA exosome complex is involved in proper maturation of stable RNA species such as rRNA, snRNA and snoRNA, in the elimination of RNA processing by-products and non-coding 'pervasive' transcripts, such as antisense RNA species and cryptic unstable transcripts (CUTs), and of mRNAs with processing defects, thereby limiting or excluding their export to the cytoplasm. In the cytoplasm, the RNA exosome complex is involved in general mRNA turnover and in RNA surveillance pathways, preventing translation of aberrant mRNAs. The catalytic inactive RNA exosome core complex of 9 subunits (Exo-9) is proposed to play a pivotal role in the binding and presentation of RNA for ribonucleolysis, and to serve as a scaffold for the association with catalytic subunits and accessory proteins or complexes. RRP40 as peripheral part of the Exo-9 complex is thought to stabilize the hexameric ring of RNase PH-domain subunits. This Saccharomyces cerevisiae (strain ATCC 204508 / S288c) (Baker's yeast) protein is Exosome complex component RRP40 (RRP40).